The chain runs to 217 residues: MAQQSLFYSFIARGTVILVEFTDFKGNFTSVAAQYLENLPSSNNKFTYNCDGHTFNDLVENGFTYCVVAVDSAGREIPMAFLERVKEDFYKRYGGEKAATDQANSLNKEFGSNLKEHMQYCMDHPDEISNLAKAKAQVSEVKSLMMENIEKVLARGVICEMLGSSESQPQAFYIKRTQMKRKKWFQNMKIKLIVLAIIIALILIIILSVCGGFNCGK.

Over 1–192 (MAQQSLFYSF…KWFQNMKIKL (192 aa)) the chain is Cytoplasmic. Residues 10-114 (FIARGTVILV…SLNKEFGSNL (105 aa)) form the Longin domain. Residues 130-186 (NLAKAKAQVSEVKSLMMENIEKVLARGVICEMLGSSESQPQAFYIKRTQMKRKKWFQ) enclose the v-SNARE coiled-coil homology domain. The helical; Anchor for type IV membrane protein transmembrane segment at 193-213 (IVLAIIIALILIIILSVCGGF) threads the bilayer. At 214 to 217 (NCGK) the chain is on the vesicular side.

The protein belongs to the synaptobrevin family. In terms of tissue distribution, highly expressed in stems and roots. Detected in flowers and leaves.

It is found in the endoplasmic reticulum membrane. In terms of biological role, involved in the targeting and/or fusion of transport vesicles to their target membrane. This Arabidopsis thaliana (Mouse-ear cress) protein is Vesicle-associated membrane protein 723.